The primary structure comprises 759 residues: Protein zyg-11 homolog A (759 aa).

LRR repeat units follow at residues 204–227 (LPRL…LTCK), 235–260 (MHYL…CLLH), and 490–513 (VTSI…FMAV).

This sequence belongs to the zyg-11 family.

Its function is as follows. Probably acts as a target recruitment subunit in an E3 ubiquitin ligase complex ZYGA-CUL2-elongin BC. The protein is Protein zyg-11 homolog A (ZYG11A) of Homo sapiens (Human).